A 467-amino-acid polypeptide reads, in one-letter code: Putative alpha-amylase (467 aa).

Glu145 functions as the Nucleophile in the catalytic mechanism.

Belongs to the glycosyl hydrolase 57 family.

The catalysed reaction is Endohydrolysis of (1-&gt;4)-alpha-D-glucosidic linkages in polysaccharides containing three or more (1-&gt;4)-alpha-linked D-glucose units.. This is Putative alpha-amylase from Methanocaldococcus jannaschii (strain ATCC 43067 / DSM 2661 / JAL-1 / JCM 10045 / NBRC 100440) (Methanococcus jannaschii).